Consider the following 451-residue polypeptide: UDP-N-acetylmuramoylalanine--D-glutamate ligase (451 aa).

Residue 119–125 (GSNGKTT) participates in ATP binding.

This sequence belongs to the MurCDEF family.

The protein localises to the cytoplasm. It catalyses the reaction UDP-N-acetyl-alpha-D-muramoyl-L-alanine + D-glutamate + ATP = UDP-N-acetyl-alpha-D-muramoyl-L-alanyl-D-glutamate + ADP + phosphate + H(+). It functions in the pathway cell wall biogenesis; peptidoglycan biosynthesis. Its function is as follows. Cell wall formation. Catalyzes the addition of glutamate to the nucleotide precursor UDP-N-acetylmuramoyl-L-alanine (UMA). This Geobacillus kaustophilus (strain HTA426) protein is UDP-N-acetylmuramoylalanine--D-glutamate ligase.